An 842-amino-acid chain; its full sequence is Protein translocase subunit SecA (842 aa).

ATP-binding positions include Q85, 103–107, and D493; that span reads GEGKT. 4 residues coordinate Zn(2+): C825, C827, C836, and H837.

The protein belongs to the SecA family. In terms of assembly, monomer and homodimer. Part of the essential Sec protein translocation apparatus which comprises SecA, SecYEG and auxiliary proteins SecDF. Other proteins may also be involved. Requires Zn(2+) as cofactor.

The protein resides in the cell membrane. The protein localises to the cytoplasm. The enzyme catalyses ATP + H2O + cellular proteinSide 1 = ADP + phosphate + cellular proteinSide 2.. Part of the Sec protein translocase complex. Interacts with the SecYEG preprotein conducting channel. Has a central role in coupling the hydrolysis of ATP to the transfer of proteins into and across the cell membrane, serving as an ATP-driven molecular motor driving the stepwise translocation of polypeptide chains across the membrane. The chain is Protein translocase subunit SecA from Streptococcus equi subsp. zooepidemicus (strain MGCS10565).